The sequence spans 60 residues: Large ribosomal subunit protein bL32 (60 aa).

Belongs to the bacterial ribosomal protein bL32 family.

The chain is Large ribosomal subunit protein bL32 from Borrelia turicatae (strain 91E135).